Consider the following 376-residue polypeptide: MTVSKFVQIRRDLHRIPEIGFKEWKTQQYILDYIGTLSHEFVEVKTWKTGVIVKVNGKNPEKIIGYRADIDGLPITEETGYEFASIHEGMMHACGHDVHTTIGLGLLTKAVSERIDDDLVFLFQPAEEGPGGALPMLESEELKEWKPNIILGLHIAPEYAVGTIATKEGLLFANTSELYIDLKGKGGHAAYPHTANDMIVAASHLVTQLQSVISRNVNPLDSAVITIGKITGGTVQNIIAEKSRLEGTIRTLSVESMKRVKSRIESIVAGIEASFQCEVIIDYGAMYHQVYNHEELTREFMEFVHKQTDMNVITCTEAMTGEDFGYMLREIPGFMFWLGVNSEYGLHHAKLKPDEEVIEKAITFLSQYVKWKGNRK.

Residue Asp69 is part of the active site. Catalysis depends on Glu128, which acts as the Proton acceptor.

It belongs to the peptidase M20A family. N-acetyldiaminopimelate deacetylase subfamily.

It catalyses the reaction N-acetyl-(2S,6S)-2,6-diaminopimelate + H2O = (2S,6S)-2,6-diaminopimelate + acetate. Its pathway is amino-acid biosynthesis; L-lysine biosynthesis via DAP pathway; LL-2,6-diaminopimelate from (S)-tetrahydrodipicolinate (acetylase route): step 3/3. In terms of biological role, catalyzes the conversion of N-acetyl-diaminopimelate to diaminopimelate and acetate. The polypeptide is N-acetyldiaminopimelate deacetylase (Bacillus cereus (strain ATCC 14579 / DSM 31 / CCUG 7414 / JCM 2152 / NBRC 15305 / NCIMB 9373 / NCTC 2599 / NRRL B-3711)).